Here is a 348-residue protein sequence, read N- to C-terminus: UPF0324 membrane protein BPP3732 (348 aa).

10 helical membrane-spanning segments follow: residues 20 to 39 (GILF…DLPF), 43 to 62 (FGFS…GNFL), 98 to 120 (IAAV…LLIG), 135 to 157 (AMLT…EPTL), 164 to 186 (SAVA…PVIY), 196 to 215 (QALG…VVGA), 235 to 257 (VALL…AAGA), 267 to 286 (VPWF…LDIL), 299 to 318 (VFVL…FAQI), and 322 to 344 (GPRV…YGIV).

Belongs to the UPF0324 family.

Its subcellular location is the cell membrane. The chain is UPF0324 membrane protein BPP3732 from Bordetella parapertussis (strain 12822 / ATCC BAA-587 / NCTC 13253).